Reading from the N-terminus, the 484-residue chain is tRNA sulfurtransferase (484 aa).

Residues 61–165 (ILLVELLGRI…NDKMMLIKAR (105 aa)) enclose the THUMP domain. ATP contacts are provided by residues 183-184 (LI), Lys265, Gly287, and Gln296. Cys344 and Cys456 are oxidised to a cystine. Residues 404–484 (LSANDVILDI…DNVKVLNKIS (81 aa)) enclose the Rhodanese domain. The Cysteine persulfide intermediate role is filled by Cys456.

This sequence belongs to the ThiI family.

Its subcellular location is the cytoplasm. The catalysed reaction is [ThiI sulfur-carrier protein]-S-sulfanyl-L-cysteine + a uridine in tRNA + 2 reduced [2Fe-2S]-[ferredoxin] + ATP + H(+) = [ThiI sulfur-carrier protein]-L-cysteine + a 4-thiouridine in tRNA + 2 oxidized [2Fe-2S]-[ferredoxin] + AMP + diphosphate. It carries out the reaction [ThiS sulfur-carrier protein]-C-terminal Gly-Gly-AMP + S-sulfanyl-L-cysteinyl-[cysteine desulfurase] + AH2 = [ThiS sulfur-carrier protein]-C-terminal-Gly-aminoethanethioate + L-cysteinyl-[cysteine desulfurase] + A + AMP + 2 H(+). It functions in the pathway cofactor biosynthesis; thiamine diphosphate biosynthesis. Its function is as follows. Catalyzes the ATP-dependent transfer of a sulfur to tRNA to produce 4-thiouridine in position 8 of tRNAs, which functions as a near-UV photosensor. Also catalyzes the transfer of sulfur to the sulfur carrier protein ThiS, forming ThiS-thiocarboxylate. This is a step in the synthesis of thiazole, in the thiamine biosynthesis pathway. The sulfur is donated as persulfide by IscS. The polypeptide is tRNA sulfurtransferase (Histophilus somni (strain 129Pt) (Haemophilus somnus)).